Here is a 949-residue protein sequence, read N- to C-terminus: Protein translocase subunit SecA (949 aa).

ATP-binding positions include glutamine 87, 105–109 (GEGKT), and aspartate 524. 2 disordered regions span residues 852–876 (PPPGENGFSGGMQEISGPQGGSSGG) and 896–939 (LEFS…GSGK). The Zn(2+) site is built by cysteine 933, cysteine 935, cysteine 944, and histidine 945.

Belongs to the SecA family. As to quaternary structure, monomer and homodimer. Part of the essential Sec protein translocation apparatus which comprises SecA, SecYEG and auxiliary proteins SecDF-YajC and YidC. Zn(2+) is required as a cofactor.

The protein localises to the cell inner membrane. Its subcellular location is the cytoplasm. The enzyme catalyses ATP + H2O + cellular proteinSide 1 = ADP + phosphate + cellular proteinSide 2.. Part of the Sec protein translocase complex. Interacts with the SecYEG preprotein conducting channel. Has a central role in coupling the hydrolysis of ATP to the transfer of proteins into and across the cell membrane, serving both as a receptor for the preprotein-SecB complex and as an ATP-driven molecular motor driving the stepwise translocation of polypeptide chains across the membrane. The protein is Protein translocase subunit SecA of Methylocella silvestris (strain DSM 15510 / CIP 108128 / LMG 27833 / NCIMB 13906 / BL2).